The following is a 37-amino-acid chain: Large ribosomal subunit protein bL36 (37 aa).

This sequence belongs to the bacterial ribosomal protein bL36 family.

This Mycoplasmopsis synoviae (strain 53) (Mycoplasma synoviae) protein is Large ribosomal subunit protein bL36.